A 908-amino-acid chain; its full sequence is NADH-quinone oxidoreductase subunit G (908 aa).

In terms of domain architecture, 2Fe-2S ferredoxin-type spans 2 to 83 (ATIHVDGKEY…GTFISIDDEE (82 aa)). Residues cysteine 34, cysteine 45, cysteine 48, and cysteine 67 each contribute to the [2Fe-2S] cluster site. A 4Fe-4S His(Cys)3-ligated-type domain is found at 83-122 (EAKQFRESVVEWLMTNHPHDCPVCEEGGNCHLQDMTVMTG). [4Fe-4S] cluster-binding residues include histidine 99, cysteine 103, cysteine 106, cysteine 112, cysteine 151, cysteine 154, cysteine 157, cysteine 201, cysteine 228, cysteine 231, cysteine 235, and cysteine 263. In terms of domain architecture, 4Fe-4S Mo/W bis-MGD-type spans 221–277 (MQFAPSICQQCSIGCNISPGERYGELRRIENRYNGTVNHYFLCDRGRFGYGYVNLKD).

This sequence belongs to the complex I 75 kDa subunit family. In terms of assembly, composed of 13 different subunits. Subunits NuoCD, E, F, and G constitute the peripheral sector of the complex. [2Fe-2S] cluster is required as a cofactor. The cofactor is [4Fe-4S] cluster.

The enzyme catalyses a quinone + NADH + 5 H(+)(in) = a quinol + NAD(+) + 4 H(+)(out). Its function is as follows. NDH-1 shuttles electrons from NADH, via FMN and iron-sulfur (Fe-S) centers, to quinones in the respiratory chain. The immediate electron acceptor for the enzyme in this species is believed to be ubiquinone. Couples the redox reaction to proton translocation (for every two electrons transferred, four hydrogen ions are translocated across the cytoplasmic membrane), and thus conserves the redox energy in a proton gradient. The chain is NADH-quinone oxidoreductase subunit G (nuoG) from Escherichia coli O6:H1 (strain CFT073 / ATCC 700928 / UPEC).